Consider the following 389-residue polypeptide: Type II methyltransferase M1.ScrFI (389 aa).

The region spanning 16 to 71 (IKEKRLRLNMTQKELADAVGMSKNGDRTIRRWENGETCPSQLEISAILRFPEIAPF) is the HTH cro/C1-type domain. The SAM-dependent MTase C5-type domain occupies 79 to 387 (YKMIDLFAGI…EKMLEVLEKS (309 aa)). C149 is a catalytic residue.

The protein belongs to the class I-like SAM-binding methyltransferase superfamily. C5-methyltransferase family.

It carries out the reaction a 2'-deoxycytidine in DNA + S-adenosyl-L-methionine = a 5-methyl-2'-deoxycytidine in DNA + S-adenosyl-L-homocysteine + H(+). In terms of biological role, a methylase, recognizes the double-stranded sequence 5'-CCNGG-3', methylates C-2 on both strands, and protects the DNA from cleavage by the ScrFI endonuclease. The chain is Type II methyltransferase M1.ScrFI (scrFIAM) from Lactococcus lactis subsp. cremoris (Streptococcus cremoris).